A 248-amino-acid polypeptide reads, in one-letter code: Probable transcriptional regulatory protein FTN_1028 (248 aa).

The protein belongs to the TACO1 family.

The protein resides in the cytoplasm. This chain is Probable transcriptional regulatory protein FTN_1028, found in Francisella tularensis subsp. novicida (strain U112).